Consider the following 466-residue polypeptide: UDP-N-acetylmuramoylalanine--D-glutamate ligase (466 aa).

ATP is bound at residue 127–133 (GSNGKST).

This sequence belongs to the MurCDEF family.

It localises to the cytoplasm. It catalyses the reaction UDP-N-acetyl-alpha-D-muramoyl-L-alanine + D-glutamate + ATP = UDP-N-acetyl-alpha-D-muramoyl-L-alanyl-D-glutamate + ADP + phosphate + H(+). It participates in cell wall biogenesis; peptidoglycan biosynthesis. Functionally, cell wall formation. Catalyzes the addition of glutamate to the nucleotide precursor UDP-N-acetylmuramoyl-L-alanine (UMA). This is UDP-N-acetylmuramoylalanine--D-glutamate ligase from Ruegeria pomeroyi (strain ATCC 700808 / DSM 15171 / DSS-3) (Silicibacter pomeroyi).